The following is a 950-amino-acid chain: Glycine dehydrogenase (decarboxylating) (950 aa).

Position 698 is an N6-(pyridoxal phosphate)lysine (Lys-698).

Belongs to the GcvP family. The glycine cleavage system is composed of four proteins: P, T, L and H. The cofactor is pyridoxal 5'-phosphate.

It carries out the reaction N(6)-[(R)-lipoyl]-L-lysyl-[glycine-cleavage complex H protein] + glycine + H(+) = N(6)-[(R)-S(8)-aminomethyldihydrolipoyl]-L-lysyl-[glycine-cleavage complex H protein] + CO2. Its function is as follows. The glycine cleavage system catalyzes the degradation of glycine. The P protein binds the alpha-amino group of glycine through its pyridoxal phosphate cofactor; CO(2) is released and the remaining methylamine moiety is then transferred to the lipoamide cofactor of the H protein. The protein is Glycine dehydrogenase (decarboxylating) of Neisseria meningitidis serogroup A / serotype 4A (strain DSM 15465 / Z2491).